We begin with the raw amino-acid sequence, 158 residues long: MKKIAIYPGSFDPITNGHVDLIKRASKLFDEIIIGISQNSKKKAFLSINDRIDTINTALKDINNIRILSFDTLLVDFASLKNAQVILRGLRAISDFEYEYQLSGINKHLNPNIETLFMTPTEQYANISSSLIKEIIALGGDISVFVPASVKTLLKHRL.

Ser10 provides a ligand contact to substrate. ATP-binding positions include 10–11 (SF) and His18. Positions 42, 74, and 88 each coordinate substrate. ATP-binding positions include 89 to 91 (GLR), Glu99, and 124 to 130 (YANISSS).

The protein belongs to the bacterial CoaD family. In terms of assembly, homohexamer. Requires Mg(2+) as cofactor.

The protein resides in the cytoplasm. The catalysed reaction is (R)-4'-phosphopantetheine + ATP + H(+) = 3'-dephospho-CoA + diphosphate. It functions in the pathway cofactor biosynthesis; coenzyme A biosynthesis; CoA from (R)-pantothenate: step 4/5. Functionally, reversibly transfers an adenylyl group from ATP to 4'-phosphopantetheine, yielding dephospho-CoA (dPCoA) and pyrophosphate. This chain is Phosphopantetheine adenylyltransferase, found in Vesicomyosocius okutanii subsp. Calyptogena okutanii (strain HA).